A 96-amino-acid chain; its full sequence is Small ribosomal subunit protein bS6 (96 aa).

This sequence belongs to the bacterial ribosomal protein bS6 family.

In terms of biological role, binds together with bS18 to 16S ribosomal RNA. In Acidothermus cellulolyticus (strain ATCC 43068 / DSM 8971 / 11B), this protein is Small ribosomal subunit protein bS6.